A 487-amino-acid chain; its full sequence is GlcNAc-binding protein A (487 aa).

A signal peptide spans 1–29 (MKKLPNKSLIALALLSVSGASFGHGYVSA). In terms of domain architecture, Chitin-binding type-4 spans 30–201 (YENGVAEGRA…SFYNVIDVKF (172 aa)). The Chitin-binding type-3 domain maps to 438–479 (AGTKVLASDGAVYQCKEFPFSGYCTQWSPSATQFEPGKGSHW).

The protein belongs to the GbpA family.

The protein localises to the secreted. Its function is as follows. Probably interacts with GlcNAc residues. May promote attachment to both epithelial cell surfaces and chitin. This Vibrio campbellii (strain ATCC BAA-1116) protein is GlcNAc-binding protein A.